We begin with the raw amino-acid sequence, 337 residues long: Ycf66-like protein (337 aa).

The segment at Thr-111 to Tyr-337 is disordered. The span at Ala-113–Glu-123 shows a compositional bias: acidic residues. Composition is skewed to basic and acidic residues over residues Arg-133–Arg-143 and Phe-253–Glu-269. Positions Gln-304–Ser-316 are enriched in polar residues.

It belongs to the ycf66 family.

The polypeptide is Ycf66-like protein (Synechocystis sp. (strain ATCC 27184 / PCC 6803 / Kazusa)).